The primary structure comprises 70 residues: Turripeptide OL179 (70 aa).

The N-terminal stretch at 1–21 (MMAKQVVVLLALLLLLPIVTA) is a signal peptide. A propeptide spanning residues 22–32 (SMGDASGRTGR) is cleaved from the precursor.

In terms of tissue distribution, expressed by the venom duct.

Its subcellular location is the secreted. Its function is as follows. Acts as a neurotoxin by inhibiting an ion channel. This is Turripeptide OL179 from Iotyrris olangoensis (Sea snail).